Here is an 83-residue protein sequence, read N- to C-terminus: Apolipoprotein C-I, acidic form (83 aa).

The signal sequence occupies residues 1–26 (MRLFLSLPVLVVVLSIVLEGPAPAQG).

It belongs to the apolipoprotein C1 family.

Its subcellular location is the secreted. The chain is Apolipoprotein C-I, acidic form (APOC1A) from Pan paniscus (Pygmy chimpanzee).